The chain runs to 311 residues: Ceroid-lipofuscinosis neuronal protein 6 (311 aa).

7 helical membrane passes run 56–76, 81–101, 111–131, 179–199, 204–224, 225–245, and 260–280; these read WVLD…WFPL, VGDY…LKLI, SITY…LVGD, CMWY…CFTA, SLIP…YWYL, VTEG…LALV, and LFLF…VAWL.

In terms of assembly, interacts with CRMP2. Interacts with CLN5. Interacts with CLN3.

The protein localises to the endoplasmic reticulum membrane. Its subcellular location is the endoplasmic reticulum. The sequence is that of Ceroid-lipofuscinosis neuronal protein 6 (CLN6) from Homo sapiens (Human).